We begin with the raw amino-acid sequence, 336 residues long: Glucokinase (336 aa).

12–17 (ADIGGT) serves as a coordination point for ATP.

It belongs to the bacterial glucokinase family.

Its subcellular location is the cytoplasm. The enzyme catalyses D-glucose + ATP = D-glucose 6-phosphate + ADP + H(+). In Helicobacter pylori (strain ATCC 700392 / 26695) (Campylobacter pylori), this protein is Glucokinase.